We begin with the raw amino-acid sequence, 172 residues long: Small ribosomal subunit protein uS5 (172 aa).

In terms of domain architecture, S5 DRBM spans 15–78 (YIEKLVNIRR…DKARKRMKSV (64 aa)).

The protein belongs to the universal ribosomal protein uS5 family. As to quaternary structure, part of the 30S ribosomal subunit. Contacts proteins S4 and S8.

Functionally, with S4 and S12 plays an important role in translational accuracy. Its function is as follows. Located at the back of the 30S subunit body where it stabilizes the conformation of the head with respect to the body. This chain is Small ribosomal subunit protein uS5, found in Ruthia magnifica subsp. Calyptogena magnifica.